The primary structure comprises 223 residues: Probable tRNA-splicing endonuclease subunit tsp-1 (223 aa).

Residues 1–55 (MESGSTPPTDKQIRENEQDGTGHQGKLLARPTSTRQQQQQQQQQPSHSVSQSVSQ) form a disordered region. Residues 30 to 55 (RPTSTRQQQQQQQQQPSHSVSQSVSQ) are compositionally biased toward low complexity.

This sequence belongs to the SEN15 family. In terms of assembly, tRNA splicing endonuclease is a heterotetramer composed of tsp-2/sen2, tsp-1/sen15, tsp-4/sen34 and tsp-5/sen54. Interacts directly with tsp-4/sen34.

Functionally, non-catalytic subunit of the tRNA-splicing endonuclease complex, a complex responsible for identification and cleavage of the splice sites in pre-tRNA. It cleaves pre-tRNA at the 5' and 3' splice sites to release the intron. The products are an intron and two tRNA half-molecules bearing 2',3' cyclic phosphate and 5'-OH termini. There are no conserved sequences at the splice sites, but the intron is invariably located at the same site in the gene, placing the splice sites an invariant distance from the constant structural features of the tRNA body. The polypeptide is Probable tRNA-splicing endonuclease subunit tsp-1 (tsp-1) (Neurospora crassa (strain ATCC 24698 / 74-OR23-1A / CBS 708.71 / DSM 1257 / FGSC 987)).